Here is a 440-residue protein sequence, read N- to C-terminus: UDP-N-acetylmuramoylalanine--D-glutamate ligase (440 aa).

109–115 (GTNGKTT) contacts ATP.

This sequence belongs to the MurCDEF family.

The protein localises to the cytoplasm. It carries out the reaction UDP-N-acetyl-alpha-D-muramoyl-L-alanine + D-glutamate + ATP = UDP-N-acetyl-alpha-D-muramoyl-L-alanyl-D-glutamate + ADP + phosphate + H(+). Its pathway is cell wall biogenesis; peptidoglycan biosynthesis. Cell wall formation. Catalyzes the addition of glutamate to the nucleotide precursor UDP-N-acetylmuramoyl-L-alanine (UMA). In Rubrobacter xylanophilus (strain DSM 9941 / JCM 11954 / NBRC 16129 / PRD-1), this protein is UDP-N-acetylmuramoylalanine--D-glutamate ligase.